The primary structure comprises 1026 residues: MRFFALFIYRPVATILIAAAITLCGILGFRLLPVAPLPQVDFPVIMVSASLPGASPETMASSVATPLERSLGRIAGVNEMTSSSSLGSTRIILEFNFDRDINGAARDVQAAINAAQSLLPGGMPSRPTYRKANPSDAPIMILTLTSESWSQGKLYDFASTQLAQTIAQIDGVGDVDVGGSSLPAVRVGLNPQALFNQGVSLDEVREAIDSANVRRPQGAIEDSVHRWQIQTNDELKTAAEYQPLIIHYNNGAAVRLGDVASVTDSVQDVRNAGMTNAKPAILLMIRKLPEANIIQTVDGIRAKLPELRAMIPAAIDLQIAQDRSPTIRASLQEVEETLAISVALVILVVFLFLRSGRATLIPAVAVPVSLIGTFAAMYLCGFSLNNLSLMALTIATGFVVDDAIVVLENIARHLEAGMKPLQAALQGTREVGFTVISMSLSLVAVFLPLLLMGGLPGRLLREFAVTLSVAIGISLVVSLTLTPMMCGWMLKSSKPRTQPRKRGVGRLLVALQQGYGTSLKWVLNHTRLVGVVFLGTVALNIWLYIAIPKTFFPEQDTGVLMGGIQADQSISFQAMRGKLQDFMKIIRDDPAVNNVTGFTGGSRVNSGMMFITLKPRGERKETAQQIIDRLRVKLAKEPGARLFLMAVQDIRVGGRQANASYQYTLLSDSLPALREWEPKIRKALSALPQLADVNSDQQDNGAEMNLIYDRDTMSRLGIDVQAANSLLNNTFGQRQISTIYQPMNQYKVVMEVDPRYTQDISALEKMFVINRDGKAIPLSYFAQWRPANAPLSVNHQGLSAASTIAFNLPTGTSLSQATEAINRTMTQLGVPSTVRGSFSGTAQVFQQTMNSQLILIVAAIATVYIVLEILYESYVHPLTILSTLPSAGVGALLALELFNAPFSLIALIGIMLLIGIVKKNAIMMVDFALEAQRSGGLTPEQAIFQACLLRFRPIMMTTLAALFGALPLVLSGGDGSELRQPLGITIVGGLVMSQLLTLYTTPVVYLFFDRLRLRFSRKNSKPVVEI.

The next 11 helical transmembrane spans lie at 15-35 (ILIA…LPVA), 333-353 (EVEE…FLFL), 360-380 (LIPA…MYLC), 387-407 (LSLM…IVVL), 431-451 (VGFT…PLLL), 463-483 (FAVT…TLTP), 528-548 (LVGV…IAIP), 853-873 (LILI…LYES), 897-917 (LFNA…IGIV), 953-973 (PIMM…LSGG), and 984-1004 (ITIV…TPVV).

This sequence belongs to the resistance-nodulation-cell division (RND) (TC 2.A.6) family. MdtC subfamily. In terms of assembly, part of a tripartite efflux system composed of MdtA, MdtB and MdtC. MdtC forms a heteromultimer with MdtB.

It localises to the cell inner membrane. The sequence is that of Multidrug resistance protein MdtC from Salmonella paratyphi A (strain AKU_12601).